A 188-amino-acid chain; its full sequence is Adenine phosphoribosyltransferase (188 aa).

This sequence belongs to the purine/pyrimidine phosphoribosyltransferase family. As to quaternary structure, homodimer.

It is found in the cytoplasm. The catalysed reaction is AMP + diphosphate = 5-phospho-alpha-D-ribose 1-diphosphate + adenine. It functions in the pathway purine metabolism; AMP biosynthesis via salvage pathway; AMP from adenine: step 1/1. Functionally, catalyzes a salvage reaction resulting in the formation of AMP, that is energically less costly than de novo synthesis. The sequence is that of Adenine phosphoribosyltransferase from Burkholderia vietnamiensis (strain G4 / LMG 22486) (Burkholderia cepacia (strain R1808)).